Consider the following 326-residue polypeptide: MKTSESTDRFGGVAGETTNRTVLLLAHTGRPAALRSARLVHESLTRAGVTVRMLASEIEAIRKTGARMQPVEVVEPGADAAAGTELIMVLGGDGTLLRAAELARPAGAPLLGVNLGHVGFLAEAERDDLSDTVRCVVERDYSVEERMTIDVAVYNGGRTSAAPAVRTWALNEATAEKVESGRMLEVVLEIDGRPLSRWGCDGVVCATPTGSTAHAFSGGGPIVWPSVEALLVVPLSAHALFARPLVVAPDAVIALEVLPETTDGVLWCDGRRRVELPAGARVEISRSKTPVRLARLQQAPFTNRLVAKFALPVAGWRGRAAERDSG.

The active-site Proton acceptor is aspartate 93. NAD(+) contacts are provided by residues 93–94 (DG), arginine 98, 171–172 (NE), arginine 182, aspartate 201, and 212–217 (TAHAFS).

It belongs to the NAD kinase family. The cofactor is a divalent metal cation.

The protein localises to the cytoplasm. It catalyses the reaction NAD(+) + ATP = ADP + NADP(+) + H(+). Its function is as follows. Involved in the regulation of the intracellular balance of NAD and NADP, and is a key enzyme in the biosynthesis of NADP. Catalyzes specifically the phosphorylation on 2'-hydroxyl of the adenosine moiety of NAD to yield NADP. The sequence is that of NAD kinase from Thermobifida fusca (strain YX).